A 423-amino-acid chain; its full sequence is Polyglutamylase complex subunit TTLL1 (423 aa).

The 367-residue stretch at 1-367 (MAGRVKWVTD…NGEIPDCKWN (367 aa)) folds into the TTL domain. ATP contacts are provided by residues lysine 138, 144–145 (QG), 181–184 (SLYI), and 194–196 (KFD). An a protein-binding site is contributed by glutamine 144. An L-glutamate-binding site is contributed by arginine 220. 241–242 (TN) lines the ATP pocket. Lysine 259 lines the L-glutamate pocket. Mg(2+)-binding residues include aspartate 313, glutamate 326, and asparagine 328. Lysine 344 provides a ligand contact to L-glutamate. Residues 390 to 423 (DGAERELRSRPGQPVGPRTGRSRDSGRNVLTTWK) form a disordered region.

It belongs to the tubulin polyglutamylase family. As to quaternary structure, part of the neuronal tubulin polyglutamylase complex which contains TPGS1, TPGS2, TTLL1, LRRC49 and NICN1. Interacts with PCM1, CSTPP1 and LRRC49. It depends on Mg(2+) as a cofactor.

The protein localises to the cytoplasm. It localises to the cytoskeleton. It is found in the cilium basal body. Its subcellular location is the cilium axoneme. The protein resides in the cell projection. The protein localises to the cilium. It localises to the flagellum. The catalysed reaction is (L-glutamyl)(n)-gamma-L-glutamyl-L-glutamyl-[protein] + L-glutamate + ATP = (L-glutamyl)(n+1)-gamma-L-glutamyl-L-glutamyl-[protein] + ADP + phosphate + H(+). In terms of biological role, catalytic subunit of a polyglutamylase complex which modifies tubulin, generating side chains of glutamate on the gamma-carboxyl group of specific glutamate residues within the C-terminal tail of tubulin. Probably involved in the side-chain elongation step of the polyglutamylation reaction rather than the initiation step. Modifies both alpha- and beta-tubulins with a preference for the alpha-tail. Unlike most polyglutamylases of the tubulin--tyrosine ligase family, only displays a catalytic activity when in complex with other proteins as it is most likely lacking domains important for autonomous activity. Part of the neuronal tubulin polyglutamylase complex. Mediates cilia and flagella polyglutamylation which is essential for their biogenesis and motility. Involved in respiratory motile cilia function through the regulation of beating asymmetry. Essential for sperm flagella biogenesis, motility and male fertility. Involved in KLF4 glutamylation which impedes its ubiquitination, thereby leading to somatic cell reprogramming, pluripotency maintenance and embryogenesis. The protein is Polyglutamylase complex subunit TTLL1 (Ttll1) of Rattus norvegicus (Rat).